Here is a 213-residue protein sequence, read N- to C-terminus: MKVLITGFDPFGGESINPALEAVKMIPENIEGAQVIKLEIPTVFRKSLEKIEEKIEEINPDVVISIGQAGGRFGVTPERVAINMDDARIEDNEGNQPIDISIYEDGESAYFSNLPIKAMVKEMVDNGIPASVSNTAGTFVCNHVMYGVLYLVNKKYKNIRAGFIHVPYIPAQVVNKPNTPSMAINDIAKGLELSIKAIVLNDNDIKTVGGAVC.

Catalysis depends on residues Glu-78, Cys-141, and His-165.

Belongs to the peptidase C15 family. In terms of assembly, homotetramer.

The protein localises to the cytoplasm. It catalyses the reaction Release of an N-terminal pyroglutamyl group from a polypeptide, the second amino acid generally not being Pro.. In terms of biological role, removes 5-oxoproline from various penultimate amino acid residues except L-proline. This is Pyrrolidone-carboxylate peptidase from Clostridium perfringens (strain 13 / Type A).